The following is a 970-amino-acid chain: Sodium/calcium exchanger 1 (970 aa).

An N-terminal signal peptide occupies residues 1–32 (MLRLSLSPTYSLGFHLLAMMTLLISHVDHITA). Residues 33–71 (ETEMVEEGNETGECTGSYYCKKGVILPIWEPQDPSFGDK) lie on the Extracellular side of the membrane. Asn41 is a glycosylation site (N-linked (GlcNAc...) asparagine). Residues 72 to 92 (IARATVYFVAMVYMFLGVSII) traverse the membrane as a helical segment. The Cytoplasmic portion of the chain corresponds to 93 to 133 (ADRFMSSIEVITSQEKEITIKKPNGETTKTTVRIWNETVSN). A helical membrane pass occupies residues 134–154 (LTLMALGSSAPEILLSVIEVC). Residues 138–178 (ALGSSAPEILLSVIEVCGHNFTAGDLGPSTIVGSAAFNMFI) form an Alpha-1 repeat. The Extracellular portion of the chain corresponds to 155-167 (GHNFTAGDLGPST). A glycan (N-linked (GlcNAc...) asparagine) is linked at Asn157. A helical membrane pass occupies residues 168–188 (IVGSAAFNMFIIIALCVYVVP). The Cytoplasmic segment spans residues 189–201 (DGETRKIKHLRVF). The chain crosses the membrane as a helical span at residues 202 to 222 (FVTAAWSIFAYTWLYIILSVI). Over 223 to 228 (SPGVVE) the chain is Extracellular. A helical membrane pass occupies residues 229-249 (VWEGLLTFFFFPICVVFAWVA). Over 250–797 (DRRLLFYKYV…FVPPTEYWNG (548 aa)) the chain is Cytoplasmic. The segment at 251-270 (RRLLFYKYVYKRYRAGKQRG) is putative calmodulin-binding region. Residues Ser282 and Ser389 each carry the phosphoserine modification. Calx-beta domains follow at residues 393–493 (VNTE…VHLS) and 524–624 (ATVT…LEIG). Ca(2+)-binding residues include Glu417, Asp453, Asp478, Asp479, Ile481, Glu483, Glu486, Asp530, Asp531, Asp532, Glu548, Asp584, Asp610, Glu611, Glu612, and Glu715. The chain crosses the membrane as a helical span at residues 798-818 (WACFIVSILMIGLLTAFIGDL). Over 819 to 821 (ASH) the chain is Extracellular. The chain crosses the membrane as a helical span at residues 822–842 (FGCTIGLKDSVTAVVFVALGT). An Alpha-2 repeat occupies 839–875 (ALGTSVPDTFASKVAATQDQYADASIGNVTGSNAVNV). Over 843-871 (SVPDTFASKVAATQDQYADASIGNVTGSN) the chain is Cytoplasmic. Residues 872–892 (AVNVFLGIGVAWSIAAIYHAA) form a helical membrane-spanning segment. Over 893 to 903 (NGEQFKVSPGT) the chain is Extracellular. A helical membrane pass occupies residues 904 to 924 (LAFSVTLFTIFAFINVGVLLY). Over 925–941 (RRRPEIGGELGGPRTAK) the chain is Cytoplasmic. Residues 942-962 (LLTSCLFVLLWLLYIFFSSLE) traverse the membrane as a helical segment. At 963–970 (AYCHIKGF) the chain is on the extracellular side.

It belongs to the Ca(2+):cation antiporter (CaCA) (TC 2.A.19) family. SLC8 subfamily.

It is found in the cell membrane. The enzyme catalyses Ca(2+)(in) + 3 Na(+)(out) = Ca(2+)(out) + 3 Na(+)(in). Its activity is regulated as follows. Activated by micromolar levels of Ca(2+). Functionally, mediates the exchange of one Ca(2+) ion against three to four Na(+) ions across the cell membrane, and thereby contributes to the regulation of cytoplasmic Ca(2+) levels and Ca(2+)-dependent cellular processes. Contributes to Ca(2+) transport during excitation-contraction coupling in muscle. In a first phase, voltage-gated channels mediate the rapid increase of cytoplasmic Ca(2+) levels due to release of Ca(2+) stores from the endoplasmic reticulum. SLC8A1 mediates the export of Ca(2+) from the cell during the next phase, so that cytoplasmic Ca(2+) levels rapidly return to baseline. Required for normal embryonic heart development and the onset of heart contractions. The polypeptide is Sodium/calcium exchanger 1 (SLC8A1) (Cavia porcellus (Guinea pig)).